The sequence spans 493 residues: Glutamate--tRNA ligase (493 aa).

The 'HIGH' region signature appears at 10–20 (PSPTGDPHVGT). Positions 251 to 255 (KLSKR) match the 'KMSKS' region motif. An ATP-binding site is contributed by Lys254.

The protein belongs to the class-I aminoacyl-tRNA synthetase family. Glutamate--tRNA ligase type 1 subfamily. In terms of assembly, monomer.

It is found in the cytoplasm. The enzyme catalyses tRNA(Glu) + L-glutamate + ATP = L-glutamyl-tRNA(Glu) + AMP + diphosphate. In terms of biological role, catalyzes the attachment of glutamate to tRNA(Glu) in a two-step reaction: glutamate is first activated by ATP to form Glu-AMP and then transferred to the acceptor end of tRNA(Glu). In Marinomonas sp. (strain MWYL1), this protein is Glutamate--tRNA ligase.